The primary structure comprises 784 residues: PWWP domain-containing protein 2A (784 aa).

Disordered regions lie at residues 1-32 (MAAV…LGRL), 244-272 (KPVE…PEDV), 463-567 (AKEK…EMQD), and 605-654 (SSSA…SSKE). Residues 244-266 (KPVESIQEESKSFHEEPLVKSEE) show a composition bias toward basic and acidic residues. Residues 536-556 (TRYSATRSAGETPSEIQSPSN) are compositionally biased toward polar residues. Over residues 605–614 (SSSASVCSSD) the composition is skewed to low complexity. The 61-residue stretch at 684-744 (VGDIVWAKIY…LSQLTPFLEN (61 aa)) folds into the PWWP domain.

Its subcellular location is the nucleus. H2A.Z-specific chromatin binding protein which plays an important role in the neural crest cell differentiation and/or migration during early development and is essential for the development of the head and eye. Acts as an adapter between distinct nucleosome components (H3K36me3 or H2A.Z) and chromatin-modifying complexes, contributing to the regulation of the levels of histone acetylation at actively transcribed genes. The sequence is that of PWWP domain-containing protein 2A (pwwp2a) from Xenopus tropicalis (Western clawed frog).